The following is a 200-amino-acid chain: Interleukin 17-like protein (200 aa).

An N-terminal signal peptide occupies residues 1 to 26; sequence MGNFFLFAMTLVVCSVIVLLTGVADS. Residue asparagine 46 is glycosylated (N-linked (GlcNAc...) asparagine). 2 disulfides stabilise this stretch: cysteine 122–cysteine 175 and cysteine 127–cysteine 177. A glycan (N-linked (GlcNAc...) asparagine) is linked at asparagine 192.

It belongs to the IL-17 family. Expressed in several tissues including hemocytes, gills, mantle, adductor muscle, labial palps, digestive glands and heart with highest levels in gills and lowest levels in adductor muscle and heart.

Its subcellular location is the secreted. The protein is Interleukin 17-like protein of Magallana gigas (Pacific oyster).